We begin with the raw amino-acid sequence, 163 residues long: Type II secretion system protein M (163 aa).

Residues 1–19 lie on the Cytoplasmic side of the membrane; sequence MMDKLQGWWRSISAREQRL. A helical membrane pass occupies residues 20-40; sequence VAVGGSCLLIGFCYWIVWQPI. Residues 41–163 are Periplasmic-facing; it reads ANRIAERERQ…VRRLQLSRPQ (123 aa).

It belongs to the GSP M family. In terms of assembly, type II secretion system is composed of four main components: the outer membrane complex, the inner membrane complex, the cytoplasmic secretion ATPase and the periplasm-spanning pseudopilus. Forms homodimers. Interacts with ExeL/GspL. Interacts with ExeE/GspE and ExeF/GspF.

The protein localises to the cell inner membrane. Functionally, inner membrane component of the type II secretion system required for the energy-dependent secretion of extracellular factors such as proteases and toxins from the periplasm. Plays a role in the complex assembly and recruits ExeL resulting in a stable complex in the inner membrane. Provides thus a link between the energy-providing ExeE protein in the cytoplasm and the rest of the T2SS machinery. This chain is Type II secretion system protein M (exeM), found in Aeromonas hydrophila.